The primary structure comprises 63 residues: Large ribosomal subunit protein bL28 (63 aa).

Belongs to the bacterial ribosomal protein bL28 family.

In Solibacter usitatus (strain Ellin6076), this protein is Large ribosomal subunit protein bL28.